The following is a 192-amino-acid chain: uncharacterized protein (192 aa).

This is an uncharacterized protein from Methanocaldococcus jannaschii (strain ATCC 43067 / DSM 2661 / JAL-1 / JCM 10045 / NBRC 100440) (Methanococcus jannaschii).